Reading from the N-terminus, the 121-residue chain is UPF0045 protein sll0230 (121 aa).

This sequence belongs to the UPF0045 family.

This Synechocystis sp. (strain ATCC 27184 / PCC 6803 / Kazusa) protein is UPF0045 protein sll0230.